The chain runs to 1050 residues: MDS1 and EVI1 complex locus protein EVI1-B (1050 aa).

3 C2H2-type zinc fingers span residues Y21 to H48, H75 to H97, and Y103 to H125. The C2H2-type 4; degenerate zinc-finger motif lies at Y131–H155. 2 consecutive C2H2-type zinc fingers follow at residues H161–H183 and F189–H211. The C2H2-type 7; atypical zinc finger occupies I218–C240. Disordered stretches follow at residues I371–D421 and P529–D612. Positions R379 to S390 are enriched in basic and acidic residues. The segment covering S397–D411 has biased composition (polar residues). Residues K420–K433 carry the Nuclear localization signal motif. Over residues P529 to K542 the composition is skewed to basic and acidic residues. The CTBP-binding motif 1 signature appears at A551 to T555. Positions S564–S576 are enriched in low complexity. Positions P582–S586 match the CTBP-binding motif 2 motif. Polar residues predominate over residues G588–Q598. Residues T599 to D612 show a composition bias toward basic and acidic residues. 3 consecutive C2H2-type zinc fingers follow at residues Y731–H753, Y759–H782, and F788–H810. Residues K928–F951 form a disordered region.

As to quaternary structure, homooligomer. Interacts with ctbp.

Its subcellular location is the nucleus. It localises to the nucleus speckle. Transcriptional repressor during pronephros development. Plays a role in regionalization of the pronephros; may promote formation of the distal tubule and duct over formation of the glomus and proximal tubule. The polypeptide is MDS1 and EVI1 complex locus protein EVI1-B (mecom-b) (Xenopus laevis (African clawed frog)).